The chain runs to 345 residues: Holliday junction branch migration complex subunit RuvB (345 aa).

The interval 1-182 (MDQRIIASSS…FGIVQRLEFY (182 aa)) is large ATPase domain (RuvB-L). ATP-binding positions include isoleucine 21, arginine 22, glycine 63, lysine 66, threonine 67, threonine 68, 129–131 (EDF), arginine 172, tyrosine 182, and arginine 219. Threonine 67 provides a ligand contact to Mg(2+). Residues 183–253 (SPQELTRIVI…VAQAAMQMLK (71 aa)) form a small ATPAse domain (RuvB-S) region. A head domain (RuvB-H) region spans residues 256-345 (PEGFDELDRR…PGIGEPGDLF (90 aa)). Residues arginine 292, arginine 311, and arginine 316 each contribute to the DNA site.

This sequence belongs to the RuvB family. In terms of assembly, homohexamer. Forms an RuvA(8)-RuvB(12)-Holliday junction (HJ) complex. HJ DNA is sandwiched between 2 RuvA tetramers; dsDNA enters through RuvA and exits via RuvB. An RuvB hexamer assembles on each DNA strand where it exits the tetramer. Each RuvB hexamer is contacted by two RuvA subunits (via domain III) on 2 adjacent RuvB subunits; this complex drives branch migration. In the full resolvosome a probable DNA-RuvA(4)-RuvB(12)-RuvC(2) complex forms which resolves the HJ.

The protein resides in the cytoplasm. It catalyses the reaction ATP + H2O = ADP + phosphate + H(+). In terms of biological role, the RuvA-RuvB-RuvC complex processes Holliday junction (HJ) DNA during genetic recombination and DNA repair, while the RuvA-RuvB complex plays an important role in the rescue of blocked DNA replication forks via replication fork reversal (RFR). RuvA specifically binds to HJ cruciform DNA, conferring on it an open structure. The RuvB hexamer acts as an ATP-dependent pump, pulling dsDNA into and through the RuvAB complex. RuvB forms 2 homohexamers on either side of HJ DNA bound by 1 or 2 RuvA tetramers; 4 subunits per hexamer contact DNA at a time. Coordinated motions by a converter formed by DNA-disengaged RuvB subunits stimulates ATP hydrolysis and nucleotide exchange. Immobilization of the converter enables RuvB to convert the ATP-contained energy into a lever motion, pulling 2 nucleotides of DNA out of the RuvA tetramer per ATP hydrolyzed, thus driving DNA branch migration. The RuvB motors rotate together with the DNA substrate, which together with the progressing nucleotide cycle form the mechanistic basis for DNA recombination by continuous HJ branch migration. Branch migration allows RuvC to scan DNA until it finds its consensus sequence, where it cleaves and resolves cruciform DNA. This chain is Holliday junction branch migration complex subunit RuvB, found in Xanthomonas oryzae pv. oryzae (strain MAFF 311018).